A 233-amino-acid chain; its full sequence is Protein AC81 (233 aa).

Transmembrane regions (helical) follow at residues 171–191 (SFQTVLLTCAILLLLFNVEKF) and 194–214 (INLLIILLILLSLFCHNNYII).

Its subcellular location is the host nucleus. It is found in the host membrane. The protein resides in the virion. Its function is as follows. Plays an essential role in the assembly of nucleocapsids with envelopes. This is Protein AC81 (AC81) from Autographa californica nuclear polyhedrosis virus (AcMNPV).